The following is a 63-amino-acid chain: Potassium channel toxin alpha-KTx 21.1 (63 aa).

The first 27 residues, 1 to 27 (MQFSGVVLILISMTLVNFVFFETKVEA), serve as a signal peptide directing secretion. Disulfide bonds link C33–C53, C38–C58, and C42–C60.

The protein belongs to the short scorpion toxin superfamily. Potassium channel inhibitor family. Alpha-KTx 21 subfamily. Expressed by the venom gland.

The protein resides in the secreted. Its function is as follows. Reversibly and voltage-independently blocks voltage-gated potassium channels rKv1.2/KCNA2 (73%) (IC(50)=196 nM), hKv1.3/KCNA3 (50%) (IC(50)=508 nM), Shaker IR (30%), rKv1.6/KCNA6 (22%) (at 0.5 uM). Interaction of Ts15 with Kv1.3/KCNA3 is stronger than its interaction with Kv1.2/KCNA2. This is Potassium channel toxin alpha-KTx 21.1 from Tityus serrulatus (Brazilian scorpion).